Consider the following 250-residue polypeptide: Triosephosphate isomerase (250 aa).

9–11 (NWK) serves as a coordination point for substrate. The active-site Electrophile is the histidine 95. The Proton acceptor role is filled by glutamate 167. Substrate is bound by residues glycine 173, serine 212, and 233 to 234 (GG).

The protein belongs to the triosephosphate isomerase family. As to quaternary structure, homodimer.

It localises to the cytoplasm. It catalyses the reaction D-glyceraldehyde 3-phosphate = dihydroxyacetone phosphate. It functions in the pathway carbohydrate biosynthesis; gluconeogenesis. The protein operates within carbohydrate degradation; glycolysis; D-glyceraldehyde 3-phosphate from glycerone phosphate: step 1/1. In terms of biological role, involved in the gluconeogenesis. Catalyzes stereospecifically the conversion of dihydroxyacetone phosphate (DHAP) to D-glyceraldehyde-3-phosphate (G3P). This Endomicrobium trichonymphae protein is Triosephosphate isomerase.